Here is a 554-residue protein sequence, read N- to C-terminus: Alpha-taxilin (554 aa).

The interval 1–66 is disordered; sequence MKNQDKKNGP…ARAKAAQPGA (66 aa). Residue Ser-71 is modified to Phosphoserine. The segment at 85–166 is disordered; it reads YCVDNNQGGP…RRPQEKKKAK (82 aa). A compositionally biased stretch (low complexity) spans 91–103; that stretch reads QGGPAEEGAQGEP. Basic and acidic residues predominate over residues 143 to 158; it reads EEIRASDEVGDRDHRR. Positions 186 to 491 form a coiled coil; that stretch reads EEKLAALCKK…NKRVQDLTAG (306 aa). Residues 492 to 554 are disordered; sequence GITDIGSERR…GPGEPTPATA (63 aa). A phosphoserine mark is found at Ser-515 and Ser-523.

The protein belongs to the taxilin family. Binds to the C-terminal coiled coil region of syntaxin family members STX1A, STX3A and STX4A, but not when these proteins are complexed with SNAP25, VAMP2 or STXBP1, suggesting that it interacts with syntaxins that do not form the SNARE complex.

Functionally, may be involved in intracellular vesicle traffic and potentially in calcium-dependent exocytosis in neuroendocrine cells. In Mus musculus (Mouse), this protein is Alpha-taxilin (Txlna).